Reading from the N-terminus, the 186-residue chain is Calcium-binding protein NCSA (186 aa).

4 EF-hand domains span residues 40–58, 66–93, 94–129, and 142–177; these read SGTI…MGVG, LFNV…ITRG, TPEE…MYKL, and DPHD…NPDI. Residues Asp107, Asp109, Asn111, Tyr113, Glu118, Asp155, Asp157, Asp159, Tyr161, and Glu166 each coordinate Ca(2+).

This sequence belongs to the recoverin family.

May prevent cells from entering development prematurely in the presence of environmental nutrients. The chain is Calcium-binding protein NCSA (ncsA) from Dictyostelium discoideum (Social amoeba).